A 275-amino-acid chain; its full sequence is Probable ABC transporter permease protein PH1216 (275 aa).

A run of 6 helical transmembrane segments spans residues 10 to 30 (LLYI…WSAI), 73 to 93 (IFTT…GFTI), 105 to 125 (LLAL…IPLV), 137 to 157 (ILGL…LLFT), 181 to 203 (IYTK…YQFT), and 241 to 261 (IQMA…IALG). Positions 68–260 (ILNSLIFTTF…LPTLLIMIAL (193 aa)) constitute an ABC transmembrane type-1 domain.

It belongs to the binding-protein-dependent transport system permease family. MalFG subfamily.

It localises to the cell membrane. Probably part of a binding-protein-dependent transport system PH1214/15/16. Probably responsible for the translocation of the substrate across the membrane. The chain is Probable ABC transporter permease protein PH1216 from Pyrococcus horikoshii (strain ATCC 700860 / DSM 12428 / JCM 9974 / NBRC 100139 / OT-3).